Here is a 182-residue protein sequence, read N- to C-terminus: Isopentenyl-diphosphate Delta-isomerase (182 aa).

2 residues coordinate Mn(2+): His25 and His32. The Nudix hydrolase domain maps to 30-164; sequence RLHLAFSSWL…PWAFSPWMVM (135 aa). Cys67 is an active-site residue. Cys67 serves as a coordination point for Mg(2+). Position 69 (His69) interacts with Mn(2+). Glu87 provides a ligand contact to Mg(2+). 2 residues coordinate Mn(2+): Glu114 and Glu116. The active site involves Glu116.

This sequence belongs to the IPP isomerase type 1 family. In terms of assembly, homodimer. Mg(2+) serves as cofactor. Requires Mn(2+) as cofactor.

It is found in the cytoplasm. The catalysed reaction is isopentenyl diphosphate = dimethylallyl diphosphate. It functions in the pathway isoprenoid biosynthesis; dimethylallyl diphosphate biosynthesis; dimethylallyl diphosphate from isopentenyl diphosphate: step 1/1. Catalyzes the 1,3-allylic rearrangement of the homoallylic substrate isopentenyl (IPP) to its highly electrophilic allylic isomer, dimethylallyl diphosphate (DMAPP). The chain is Isopentenyl-diphosphate Delta-isomerase from Shigella dysenteriae serotype 1 (strain Sd197).